The sequence spans 1049 residues: Multiple C2 domain and transmembrane region protein 16 (1049 aa).

Residues 1-112 enclose the C2 1 domain; that stretch reads MATTRKLVVE…VGQGEEALIY (112 aa). The segment at 136 to 249 is disordered; that stretch reads DEKPPPLKPT…PPQNQPDGED (114 aa). Composition is skewed to basic and acidic residues over residues 153 to 170 and 226 to 238; these read VEEKTEETKAEGPDESKP and ESDKNEAEAKPVE. C2 domains are found at residues 302-426, 460-582, and 617-745; these read TSEI…PQWY, TAGN…SRWL, and VCSD…RNTY. Residues Ser338, Asp390, Thr393, and Ser398 each coordinate Ca(2+). A run of 2 helical transmembrane segments spans residues 883 to 903 and 989 to 1009; these read VMLIWFPDLIVPTLAFYLFVI and ATGIFVGLCFFVALVLYLVPT.

The protein belongs to the MCTP family. Ca(2+) is required as a cofactor. As to expression, expressed in the vascular tissues of roots, cotyledons and rosette leaves. Accumulates in roots meristems and shoot apical meristems (SAMs). Observed in flowers.

The protein resides in the endoplasmic reticulum membrane. Functionally, may function as a signaling molecule by regulating the trafficking of other regulators. This Arabidopsis thaliana (Mouse-ear cress) protein is Multiple C2 domain and transmembrane region protein 16.